The sequence spans 256 residues: MTDVARILKEARDQGRMTALDYASLIFDEFMELHGDRQFADDGSIVGGIAYLADQPVTVIGIQKGKNLQDNLARNFGQPHPEGYRKALRLMKQAEKFGRPVITFINTAGAYPGVGAEERGQGEAIARNLMEMSDLKVPIIAIIIGEGGSGGALALAVADQVWMLENTMYAVLSPEGFASILWKDGSRATEAAELMKITAAELYQMGVIDRIIPERGYFSSEIVEMIKSHLIDEITQLQAKPLEELLDQRYQRFRKY.

One can recognise a CoA carboxyltransferase C-terminal domain in the interval methionine 1–glutamine 236.

Belongs to the AccA family. In terms of assembly, acetyl-CoA carboxylase is a heterohexamer composed of biotin carboxyl carrier protein (AccB), biotin carboxylase (AccC) and two subunits each of ACCase subunit alpha (AccA) and ACCase subunit beta (AccD).

The protein localises to the cytoplasm. The enzyme catalyses N(6)-carboxybiotinyl-L-lysyl-[protein] + acetyl-CoA = N(6)-biotinyl-L-lysyl-[protein] + malonyl-CoA. It participates in lipid metabolism; malonyl-CoA biosynthesis; malonyl-CoA from acetyl-CoA: step 1/1. In terms of biological role, component of the acetyl coenzyme A carboxylase (ACC) complex. First, biotin carboxylase catalyzes the carboxylation of biotin on its carrier protein (BCCP) and then the CO(2) group is transferred by the carboxyltransferase to acetyl-CoA to form malonyl-CoA. This Streptococcus equi subsp. equi (strain 4047) protein is Acetyl-coenzyme A carboxylase carboxyl transferase subunit alpha.